We begin with the raw amino-acid sequence, 240 residues long: LexA repressor (240 aa).

A DNA-binding region (H-T-H motif) is located at residues 26–46; that stretch reads FDEMKDALDLKSKSGIHRLIT. Catalysis depends on for autocatalytic cleavage activity residues Ser161 and Lys199.

The protein belongs to the peptidase S24 family. Homodimer.

It carries out the reaction Hydrolysis of Ala-|-Gly bond in repressor LexA.. Represses a number of genes involved in the response to DNA damage (SOS response), including recA and lexA. In the presence of single-stranded DNA, RecA interacts with LexA causing an autocatalytic cleavage which disrupts the DNA-binding part of LexA, leading to derepression of the SOS regulon and eventually DNA repair. In Methylobacterium nodulans (strain LMG 21967 / CNCM I-2342 / ORS 2060), this protein is LexA repressor.